A 498-amino-acid chain; its full sequence is DNA primase (498 aa).

A CHC2-type zinc finger spans residues 35–59; sequence CPFHPDDTPSFYVSPSKQIFKCFGC. The Toprim domain occupies 243–324; sequence GFAILVEGYF…EVYPVYLPEG (82 aa). Glu-249, Asp-293, and Asp-295 together coordinate Mg(2+).

Belongs to the DnaG primase family. In terms of assembly, monomer. Interacts with DnaB. The cofactor is Zn(2+). Mg(2+) serves as cofactor.

The enzyme catalyses ssDNA + n NTP = ssDNA/pppN(pN)n-1 hybrid + (n-1) diphosphate.. RNA polymerase that catalyzes the synthesis of short RNA molecules used as primers for DNA polymerase during DNA replication. The polypeptide is DNA primase (Aquifex aeolicus (strain VF5)).